The sequence spans 80 residues: Saposin-B-Val (80 aa).

One can recognise a Saposin B-type domain in the interval 1-80; sequence GDVCQDCIQM…CGLVGFCEEV (80 aa). Intrachain disulfides connect cysteine 4–cysteine 77, cysteine 7–cysteine 71, and cysteine 36–cysteine 47. N-linked (GlcNAc...) (complex) asparagine glycosylation occurs at asparagine 21.

In terms of assembly, saposin-B is a homodimer. Interacts with GRN; facilitates lysosomal delivery of progranulin from the extracellular space and the biosynthetic pathway. In terms of processing, the one residue extended Saposin-B-Val is only found in a minority of the chains.

In terms of biological role, saposin-B stimulates the hydrolysis of galacto-cerebroside sulfate by arylsulfatase A (EC 3.1.6.8), GM1 gangliosides by beta-galactosidase (EC 3.2.1.23) and globotriaosylceramide by alpha-galactosidase A (EC 3.2.1.22). Saposin-B forms a solubilizing complex with the substrates of the sphingolipid hydrolases. The polypeptide is Saposin-B-Val (PSAP) (Sus scrofa (Pig)).